We begin with the raw amino-acid sequence, 297 residues long: Homoserine kinase (297 aa).

82-92 (PLTRGLGSSAS) lines the ATP pocket.

It belongs to the GHMP kinase family. Homoserine kinase subfamily.

It is found in the cytoplasm. It catalyses the reaction L-homoserine + ATP = O-phospho-L-homoserine + ADP + H(+). It participates in amino-acid biosynthesis; L-threonine biosynthesis; L-threonine from L-aspartate: step 4/5. Its function is as follows. Catalyzes the ATP-dependent phosphorylation of L-homoserine to L-homoserine phosphate. In Bacillus cereus (strain B4264), this protein is Homoserine kinase.